Here is a 373-residue protein sequence, read N- to C-terminus: tRNA-specific 2-thiouridylase MnmA (373 aa).

ATP is bound by residues 12-19 (GMSGGVDS) and M38. The segment at 98–100 (NPD) is interaction with target base in tRNA. Residue C103 is the Nucleophile of the active site. A disulfide bridge connects residues C103 and C200. G127 lines the ATP pocket. Residues 150–152 (KDQ) form an interaction with tRNA region. The Cysteine persulfide intermediate role is filled by C200. Positions 312–313 (RY) are interaction with tRNA.

The protein belongs to the MnmA/TRMU family.

It localises to the cytoplasm. It carries out the reaction S-sulfanyl-L-cysteinyl-[protein] + uridine(34) in tRNA + AH2 + ATP = 2-thiouridine(34) in tRNA + L-cysteinyl-[protein] + A + AMP + diphosphate + H(+). Functionally, catalyzes the 2-thiolation of uridine at the wobble position (U34) of tRNA, leading to the formation of s(2)U34. This is tRNA-specific 2-thiouridylase MnmA from Streptococcus pyogenes serotype M12 (strain MGAS2096).